Here is a 258-residue protein sequence, read N- to C-terminus: uncharacterized protein (258 aa).

ATP is bound at residue 36 to 43 (GKAGTGKS).

Belongs to the IIV-6 075L family.

This is an uncharacterized protein from Acheta domesticus (House cricket).